Consider the following 264-residue polypeptide: tRNA pseudouridine synthase A (264 aa).

Aspartate 51 (nucleophile) is an active-site residue. Tyrosine 109 serves as a coordination point for substrate.

Belongs to the tRNA pseudouridine synthase TruA family. As to quaternary structure, homodimer.

The catalysed reaction is uridine(38/39/40) in tRNA = pseudouridine(38/39/40) in tRNA. Its function is as follows. Formation of pseudouridine at positions 38, 39 and 40 in the anticodon stem and loop of transfer RNAs. This chain is tRNA pseudouridine synthase A, found in Vibrio atlanticus (strain LGP32) (Vibrio splendidus (strain Mel32)).